We begin with the raw amino-acid sequence, 51 residues long: Insulin (51 aa).

3 cysteine pairs are disulfide-bonded: C7-C37, C19-C50, and C36-C41.

It belongs to the insulin family. Heterodimer of a B chain and an A chain linked by two disulfide bonds.

The protein resides in the secreted. In terms of biological role, insulin decreases blood glucose concentration. It increases cell permeability to monosaccharides, amino acids and fatty acids. It accelerates glycolysis, the pentose phosphate cycle, and glycogen synthesis in liver. The sequence is that of Insulin (INS) from Alligator mississippiensis (American alligator).